The following is a 379-amino-acid chain: Glutamate 5-kinase (379 aa).

Lys19 lines the ATP pocket. Residues Ser59, Asp146, and Asn158 each coordinate substrate. Residues 178 to 179 (TD) and 220 to 226 (TGGMATK) contribute to the ATP site. One can recognise a PUA domain in the interval 285–363 (SGDIVIDQGA…KDIISILGYD (79 aa)).

This sequence belongs to the glutamate 5-kinase family.

The protein resides in the cytoplasm. It carries out the reaction L-glutamate + ATP = L-glutamyl 5-phosphate + ADP. Its pathway is amino-acid biosynthesis; L-proline biosynthesis; L-glutamate 5-semialdehyde from L-glutamate: step 1/2. In terms of biological role, catalyzes the transfer of a phosphate group to glutamate to form L-glutamate 5-phosphate. In Vibrio vulnificus (strain YJ016), this protein is Glutamate 5-kinase.